Here is a 179-residue protein sequence, read N- to C-terminus: Large ribosomal subunit protein uL5 (179 aa).

The protein belongs to the universal ribosomal protein uL5 family. As to quaternary structure, part of the 50S ribosomal subunit; part of the 5S rRNA/L5/L18/L25 subcomplex. Contacts the 5S rRNA and the P site tRNA. Forms a bridge to the 30S subunit in the 70S ribosome.

This is one of the proteins that bind and probably mediate the attachment of the 5S RNA into the large ribosomal subunit, where it forms part of the central protuberance. In the 70S ribosome it contacts protein S13 of the 30S subunit (bridge B1b), connecting the 2 subunits; this bridge is implicated in subunit movement. Contacts the P site tRNA; the 5S rRNA and some of its associated proteins might help stabilize positioning of ribosome-bound tRNAs. This is Large ribosomal subunit protein uL5 from Yersinia pestis.